The following is an 83-amino-acid chain: Putative membrane protein insertion efficiency factor (83 aa).

This sequence belongs to the UPF0161 family.

It is found in the cell membrane. Its function is as follows. Could be involved in insertion of integral membrane proteins into the membrane. This chain is Putative membrane protein insertion efficiency factor, found in Staphylococcus saprophyticus subsp. saprophyticus (strain ATCC 15305 / DSM 20229 / NCIMB 8711 / NCTC 7292 / S-41).